A 338-amino-acid polypeptide reads, in one-letter code: Heat-inducible transcription repressor HrcA (338 aa).

The protein belongs to the HrcA family.

In terms of biological role, negative regulator of class I heat shock genes (grpE-dnaK-dnaJ and groELS operons). Prevents heat-shock induction of these operons. The protein is Heat-inducible transcription repressor HrcA of Bacillus cereus (strain AH820).